Consider the following 154-residue polypeptide: Myoglobin (154 aa).

A Globin domain is found at 2 to 148 (VLSDAEWQLV…FRKDIAAKYK (147 aa)). Serine 4 carries the phosphoserine modification. Histidine 65 lines the nitrite pocket. Residue histidine 65 coordinates O2. Threonine 68 carries the phosphothreonine modification. Histidine 94 is a heme b binding site.

Belongs to the globin family. As to quaternary structure, monomeric.

The protein resides in the cytoplasm. It is found in the sarcoplasm. The catalysed reaction is Fe(III)-heme b-[protein] + nitric oxide + H2O = Fe(II)-heme b-[protein] + nitrite + 2 H(+). The enzyme catalyses H2O2 + AH2 = A + 2 H2O. Monomeric heme protein which primary function is to store oxygen and facilitate its diffusion within muscle tissues. Reversibly binds oxygen through a pentacoordinated heme iron and enables its timely and efficient release as needed during periods of heightened demand. Depending on the oxidative conditions of tissues and cells, and in addition to its ability to bind oxygen, it also has a nitrite reductase activity whereby it regulates the production of bioactive nitric oxide. Under stress conditions, like hypoxia and anoxia, it also protects cells against reactive oxygen species thanks to its pseudoperoxidase activity. The polypeptide is Myoglobin (MB) (Megaptera novaeangliae (Humpback whale)).